Here is a 232-residue protein sequence, read N- to C-terminus: PsbP domain-containing protein 2, chloroplastic (232 aa).

The transit peptide at 1 to 34 directs the protein to the chloroplast; the sequence is MWSQSFLGSAPKLCLFSSSLPPFSHHKIHKFFCF. The N-terminal 37 residues, 35 to 71, are a transit peptide targeting the thylakoid; sequence AQNPSSTVSINLSKRHLNLSILTLFFNGFLLDNKAKS.

It belongs to the PsbP family.

It localises to the plastid. Its subcellular location is the chloroplast thylakoid lumen. This Arabidopsis thaliana (Mouse-ear cress) protein is PsbP domain-containing protein 2, chloroplastic (PPD2).